Here is a 298-residue protein sequence, read N- to C-terminus: Diphthine methyl ester synthase (298 aa).

S-adenosyl-L-methionine is bound by residues leucine 9, aspartate 85, glycine 88, 113–114, leucine 164, leucine 222, and histidine 247; that span reads SV.

Belongs to the diphthine synthase family.

The protein resides in the cytoplasm. The catalysed reaction is 2-[(3S)-amino-3-carboxypropyl]-L-histidyl-[translation elongation factor 2] + 4 S-adenosyl-L-methionine = diphthine methyl ester-[translation elongation factor 2] + 4 S-adenosyl-L-homocysteine + 3 H(+). It participates in protein modification; peptidyl-diphthamide biosynthesis. S-adenosyl-L-methionine-dependent methyltransferase that catalyzes four methylations of the modified target histidine residue in translation elongation factor 2 (EF-2), to form an intermediate called diphthine methyl ester. The four successive methylation reactions represent the second step of diphthamide biosynthesis. In Candida glabrata (strain ATCC 2001 / BCRC 20586 / JCM 3761 / NBRC 0622 / NRRL Y-65 / CBS 138) (Yeast), this protein is Diphthine methyl ester synthase (DPH5).